The chain runs to 413 residues: Phosphopentomutase (413 aa).

Residues Asp11, Asp306, His311, Asp347, His348, and His359 each coordinate Mn(2+).

It belongs to the phosphopentomutase family. The cofactor is Mn(2+).

The protein resides in the cytoplasm. It carries out the reaction 2-deoxy-alpha-D-ribose 1-phosphate = 2-deoxy-D-ribose 5-phosphate. The enzyme catalyses alpha-D-ribose 1-phosphate = D-ribose 5-phosphate. It functions in the pathway carbohydrate degradation; 2-deoxy-D-ribose 1-phosphate degradation; D-glyceraldehyde 3-phosphate and acetaldehyde from 2-deoxy-alpha-D-ribose 1-phosphate: step 1/2. In terms of biological role, isomerase that catalyzes the conversion of deoxy-ribose 1-phosphate (dRib-1-P) and ribose 1-phosphate (Rib-1-P) to deoxy-ribose 5-phosphate (dRib-5-P) and ribose 5-phosphate (Rib-5-P), respectively. The sequence is that of Phosphopentomutase from Helicobacter pylori (strain G27).